The chain runs to 220 residues: CRISPR system Cms endoribonuclease Csm3 (220 aa).

Belongs to the CRISPR-associated Csm3 family. In terms of assembly, part of the Csm effector complex that includes at least Cas10(1), Csm2(3), Csm3(5), Csm4(1), Csm5(1) and mature crRNA. The Csm complex is elongated and slightly twisted with a maximal length of 215 Angstroms and a diameter of 75-80 Angstroms. It has been modeled to have a central protein filamant of Csm3 subunits along which the dsRNA helix of paired crRNA and target RNA binds. The filament is capped at one end by Cas10 and Csm4 and at the other end by Csm5; ssDNA is thought to bind to the N-terminal HD domain of Cas10. Csm with a precursor crRNA does not include Csm5, while Cas6, the enzyme probably involved in pre-crRNA processing, is found associated with a subset of the Csm complex. It depends on a metal cation as a cofactor.

Target ssRNase is inhibited by EDTA. Its function is as follows. CRISPR (clustered regularly interspaced short palindromic repeat) is an adaptive immune system that provides protection against mobile genetic elements (viruses, transposable elements and conjugative plasmids). CRISPR clusters contain spacers, sequences complementary to antecedent mobile elements, and target invading nucleic acids. CRISPR clusters are transcribed and processed into CRISPR RNA (crRNA). The type III-A Csm effector complex binds crRNA and acts as a crRNA-guided RNase, DNase and cyclic oligoadenylate synthase; binding of target RNA cognate to the crRNA is required for all activities. In a heterologous host this Csm effector complex restricts ssRNA phage MS2, suggesting it may target RNA viruses in vivo. Functionally, csm functions as a non-specific ssDNase. Base-pairing between crRNA and target RNA to form a ternary Csm complex activates a ssDNase activity; target RNA cleavage suppresses the ssDNase, a temporal control that prevents uncontrolled DNA degradation. Viral RNA transcripts probably tether the Csm complex to the viral genome, recruiting Cas10 ssDNA activity which is able to degrade DNA in the transcription bubble, spatially controlling the DNase activity. This subunit has the target ssRNA endonuclease activity; it cleaves multiple sites in the target RNA at 6 nucleotide intervals. The number of cleavage sites in the target RNA correlates with the number of Csm3 subunits in the Csm effector complex. In the Csm complex target RNA and ssDNA are cleaved simultaneously, although RNase activity (of Csm3) is much faster. RNA cleavage by Csm3 is not required for ssDNase activity as Csm complex with inactive Csm3 still has ssDNase activity; however as the cleaved target RNA products dissociate away ssDNase activity decreases. This chain is CRISPR system Cms endoribonuclease Csm3, found in Streptococcus thermophilus.